The following is a 128-amino-acid chain: Holo-[acyl-carrier-protein] synthase (128 aa).

Residues Asp-8 and Glu-60 each contribute to the Mg(2+) site.

Belongs to the P-Pant transferase superfamily. AcpS family. Mg(2+) is required as a cofactor.

Its subcellular location is the cytoplasm. The catalysed reaction is apo-[ACP] + CoA = holo-[ACP] + adenosine 3',5'-bisphosphate + H(+). In terms of biological role, transfers the 4'-phosphopantetheine moiety from coenzyme A to a Ser of acyl-carrier-protein. In Anaeromyxobacter dehalogenans (strain 2CP-1 / ATCC BAA-258), this protein is Holo-[acyl-carrier-protein] synthase.